Reading from the N-terminus, the 404-residue chain is ATP phosphoribosyltransferase regulatory subunit (404 aa).

The protein belongs to the class-II aminoacyl-tRNA synthetase family. HisZ subfamily. As to quaternary structure, heteromultimer composed of HisG and HisZ subunits.

Its subcellular location is the cytoplasm. The protein operates within amino-acid biosynthesis; L-histidine biosynthesis; L-histidine from 5-phospho-alpha-D-ribose 1-diphosphate: step 1/9. Its function is as follows. Required for the first step of histidine biosynthesis. May allow the feedback regulation of ATP phosphoribosyltransferase activity by histidine. This chain is ATP phosphoribosyltransferase regulatory subunit, found in Trichormus variabilis (strain ATCC 29413 / PCC 7937) (Anabaena variabilis).